Reading from the N-terminus, the 197-residue chain is UPF0215 protein MK0057 (197 aa).

Belongs to the UPF0215 family.

The sequence is that of UPF0215 protein MK0057 from Methanopyrus kandleri (strain AV19 / DSM 6324 / JCM 9639 / NBRC 100938).